Reading from the N-terminus, the 69-residue chain is DNA-directed RNA polymerase subunit epsilon (69 aa).

Belongs to the RNA polymerase subunit epsilon family. As to quaternary structure, RNAP is composed of a core of 2 alpha, a beta and a beta' subunit. The core is associated with a delta subunit, and at least one of epsilon or omega. When a sigma factor is associated with the core the holoenzyme is formed, which can initiate transcription.

It carries out the reaction RNA(n) + a ribonucleoside 5'-triphosphate = RNA(n+1) + diphosphate. Functionally, a non-essential component of RNA polymerase (RNAP). This Bacillus velezensis (strain DSM 23117 / BGSC 10A6 / LMG 26770 / FZB42) (Bacillus amyloliquefaciens subsp. plantarum) protein is DNA-directed RNA polymerase subunit epsilon.